A 407-amino-acid chain; its full sequence is RNA-binding motif, single-stranded-interacting protein 2 (407 aa).

At Met-1 the chain carries N-acetylmethionine. The tract at residues 29 to 54 is disordered; it reads QQMAPPSPSNSTPNSSSGSNGNDQLS. Residues 37–50 are compositionally biased toward low complexity; that stretch reads SNSTPNSSSGSNGN. 2 consecutive RRM domains span residues 56-129 and 135-220; these read TNLY…MAKQ and TNLY…FADG. Residue Ser-106 is modified to Phosphoserine. Thr-269 carries the post-translational modification Phosphothreonine. Ser-280 and Ser-285 each carry phosphoserine.

It localises to the nucleus. The chain is RNA-binding motif, single-stranded-interacting protein 2 (RBMS2) from Homo sapiens (Human).